A 320-amino-acid polypeptide reads, in one-letter code: Cytosolic Fe-S cluster assembly factor NUBP1 (320 aa).

Met-1 bears the N-acetylmethionine mark. Residues Cys-8, Cys-22, Cys-25, and Cys-31 each coordinate [4Fe-4S] cluster. ATP is bound at residue 62–69; the sequence is GKGGVGKS. 2 residues coordinate [4Fe-4S] cluster: Cys-235 and Cys-238. Residue Ser-319 is modified to Phosphoserine.

This sequence belongs to the Mrp/NBP35 ATP-binding proteins family. NUBP1/NBP35 subfamily. In terms of assembly, heterotetramer of 2 NUBP1 and 2 NUBP2 chains. Interacts with KIFC1. Interacts with the BBS/CCT complex subunit CCT1. It depends on [4Fe-4S] cluster as a cofactor.

It is found in the cytoplasm. The protein resides in the nucleus. The protein localises to the cell projection. Its subcellular location is the cytoskeleton. It localises to the cilium axoneme. It is found in the cilium basal body. The protein resides in the microtubule organizing center. The protein localises to the centrosome. Its subcellular location is the centriole. In terms of biological role, component of the cytosolic iron-sulfur (Fe/S) protein assembly (CIA) machinery. Required for maturation of extramitochondrial Fe-S proteins. The NUBP1-NUBP2 heterotetramer forms a Fe-S scaffold complex, mediating the de novo assembly of an Fe-S cluster and its transfer to target apoproteins. Implicated in the regulation of centrosome duplication. Negatively regulates cilium formation and structure. This Rattus norvegicus (Rat) protein is Cytosolic Fe-S cluster assembly factor NUBP1.